Consider the following 421-residue polypeptide: Replication-associated recombination protein A (421 aa).

Residue 45–52 coordinates ATP; it reads GPPGIGKT.

This sequence belongs to the AAA ATPase family. RarA/MGS1/WRNIP1 subfamily. In terms of assembly, homotetramer. Interacts with single-stranded binding protein SsbA. May interact with PriA.

It localises to the cytoplasm. It is found in the nucleoid. Its activity is regulated as follows. ssDNA-dependent ATP hydrolysis is stimulated by single-stranded binding protein SsbA but not by SsbB; in the presence of SsbB, ssDNA secondary structure is removed and RarA's ATPase activity is decreased. The C-terminal 9 residues of SsbA are sufficient to stimulate ATPase activity. Its function is as follows. Plays a role in recombination-dependent DNA replication. Positively affects the formation of RecA threads during response to DNA damage, directly or indirectly counteracting the negative RecA modulators RecX and RecU. Stabilizes a RecA-ssDNA complex. In vitro, in the presence of SsbA, inhibits PriA-dependent DNA replication restart of both leading and lagging strands; elongation is insensitive to RarA. Plays a role in response to DNA damage, localizes to the replication fork but also to DNA elsewhere in the cell. Probably required for repair of single-stranded nicks generated by H(2)O(2). Epistatic to RecA, partially represses deletions of the error-prone translesion DNA polymerases (dinB1 and dinB2), genetically interacts with replicative helicase loaders dnaB and dnaD. Epistatic to recF and recO mutations upon DNA damage. A DNA-dependent ATPase stimulated by hairpin structures in circular single-stranded (ss)DNA or ssDNA-dsDNA junctions, by blunt end and 5'-tailed dsDNA and by single-stranded binding protein SsbA protein bound to ssDNA. Preferentially binds ssDNA and replication-fork structures; SsbA stimulates binding to ssDNA. Addition of ATP to the protein has no visible effect in vitro. The chain is Replication-associated recombination protein A from Bacillus subtilis (strain 168).